A 314-amino-acid polypeptide reads, in one-letter code: Dihydropteroate synthase (314 aa).

Residues 10–294 enclose the Pterin-binding domain; the sequence is TVICGIINVT…DVASHRMAVE (285 aa). A Mg(2+)-binding site is contributed by N17. Residues D91, N110, D201, K237, and 282–284 each bind (7,8-dihydropterin-6-yl)methyl diphosphate; that span reads RVH.

This sequence belongs to the DHPS family. Homodimer. Mg(2+) is required as a cofactor.

The catalysed reaction is (7,8-dihydropterin-6-yl)methyl diphosphate + 4-aminobenzoate = 7,8-dihydropteroate + diphosphate. Its pathway is cofactor biosynthesis; tetrahydrofolate biosynthesis; 7,8-dihydrofolate from 2-amino-4-hydroxy-6-hydroxymethyl-7,8-dihydropteridine diphosphate and 4-aminobenzoate: step 1/2. With respect to regulation, is potently inhibited by sulfonamides, with Ki values between 25 nM and 850 nM. Its function is as follows. Catalyzes the condensation of para-aminobenzoate (pABA) with 6-hydroxymethyl-7,8-dihydropterin diphosphate (DHPt-PP) to form 7,8-dihydropteroate, the immediate precursor of folate derivatives. Functionally, is the target for the sulfonamide group of antimicrobial drugs. Sulfonamide drugs act as pABA analogs, they inhibit the reaction by acting as alternative substrates, leading to a 'dead end' sulfa-pterin product. This chain is Dihydropteroate synthase (sulA), found in Streptococcus pneumoniae (strain ATCC BAA-255 / R6).